The sequence spans 131 residues: Small ribosomal subunit protein bS6 (131 aa).

The tract at residues 98-131 is disordered; the sequence is EASPMVKAKDERRERRDDFANETADDSDAGDSEE. The span at 104–116 shows a compositional bias: basic and acidic residues; the sequence is KAKDERRERRDDF. The segment covering 120–131 has biased composition (acidic residues); it reads TADDSDAGDSEE.

It belongs to the bacterial ribosomal protein bS6 family.

In terms of biological role, binds together with bS18 to 16S ribosomal RNA. The chain is Small ribosomal subunit protein bS6 from Enterobacter sp. (strain 638).